Here is a 593-residue protein sequence, read N- to C-terminus: MLGRIRPFVRYSVFRAGTYRTLFTSPYRMQISLIYNLFATCNSCGIKLQNENPSKPGFYRPPSARPKLVKPEDESFNRLMDGLSVEDRKLLLNSSDATLPQPVTASTAAATTTNTKKEGDIQCIRCREAMYKSNFSWDELPVESIDKIMSTIPPDGNVVYIVNAVDFPLSLNRSIFKYRNPSQITFLVTKCDLLFPSAQLSNRYGATFFKDYLSRTHGADPEKVFVTSGMIDWNMKDIIKALPDNSYMVGGVNSGKSTVIKSLLYTMEKSKPNYLSSKQQTKLEKQQDRMINSNAVNRHQHTKSQRKVEQKFKMTYGPGTSYMPGFTRGHIVHDIDGKTIVDVPGFSANESHGIYGYLDPSTIKTLSKGVKVHKRGMYDSLYESVRNGQVLTIGGLFYLATPQNAVYQIKNCINHKFHVFNSMDKAISILQTIEKNKALENVFLVNKQSLDKLQKFIIPPFYGSIDLVIKNLGHLNITPTGKKIDNEPLVIYLPEGVEAIIRQPLTRYITRSLAGRDKNGNPLRKELWKSKSVTHLQRFNGTTPFASLLIPSTGSDNLQCISEYNSKLNDTPITYDNNTHLDESNKYKYWVNI.

A mitochondrion-targeting transit peptide spans 1–61 (MLGRIRPFVR…NPSKPGFYRP (61 aa)). Positions 142–349 (VESIDKIMST…IVDVPGFSAN (208 aa)) constitute a CP-type G domain.

It belongs to the TRAFAC class YlqF/YawG GTPase family. GEP3 subfamily.

The protein resides in the mitochondrion. Its function is as follows. May be involved in the mitochondrial lipid metabolism. The protein is Genetic interactor of prohibitins 3, mitochondrial (GEP3) of Debaryomyces hansenii (strain ATCC 36239 / CBS 767 / BCRC 21394 / JCM 1990 / NBRC 0083 / IGC 2968) (Yeast).